We begin with the raw amino-acid sequence, 429 residues long: Glutamate-1-semialdehyde 2,1-aminomutase (429 aa).

N6-(pyridoxal phosphate)lysine is present on Lys265.

The protein belongs to the class-III pyridoxal-phosphate-dependent aminotransferase family. HemL subfamily. In terms of assembly, homodimer. Requires pyridoxal 5'-phosphate as cofactor.

It localises to the cytoplasm. It carries out the reaction (S)-4-amino-5-oxopentanoate = 5-aminolevulinate. It participates in porphyrin-containing compound metabolism; protoporphyrin-IX biosynthesis; 5-aminolevulinate from L-glutamyl-tRNA(Glu): step 2/2. The sequence is that of Glutamate-1-semialdehyde 2,1-aminomutase from Acidobacterium capsulatum (strain ATCC 51196 / DSM 11244 / BCRC 80197 / JCM 7670 / NBRC 15755 / NCIMB 13165 / 161).